A 276-amino-acid chain; its full sequence is Alpha N-terminal protein methyltransferase 1 (276 aa).

Residues 1 to 57 are disordered; that stretch reads MTTTLEEQLSDKLQMMDETTDKVQGSSKQKDDSSIAASSDAKTASPSSSDSSTKVAA. Positions 34 to 57 are enriched in low complexity; the sequence is SIAASSDAKTASPSSSDSSTKVAA. S-adenosyl-L-methionine contacts are provided by residues Gly114, Arg119, 136–138, 167–168, and Gln182; these read EQD and LQ.

It belongs to the methyltransferase superfamily. NTM1 family.

The catalysed reaction is N-terminal L-alanyl-L-prolyl-L-lysyl-[protein] + 3 S-adenosyl-L-methionine = N-terminal N,N,N-trimethyl-L-alanyl-L-prolyl-L-lysyl-[protein] + 3 S-adenosyl-L-homocysteine + 3 H(+). It catalyses the reaction N-terminal L-seryl-L-prolyl-L-lysyl-[protein] + 3 S-adenosyl-L-methionine = N-terminal N,N,N-trimethyl-L-seryl-L-prolyl-L-lysyl-[protein] + 3 S-adenosyl-L-homocysteine + 3 H(+). It carries out the reaction N-terminal L-prolyl-L-prolyl-L-lysyl-[protein] + 2 S-adenosyl-L-methionine = N-terminal N,N-dimethyl-L-prolyl-L-prolyl-L-lysyl-[protein] + 2 S-adenosyl-L-homocysteine + 2 H(+). In terms of biological role, alpha-N-methyltransferase that methylates the N-terminus of target proteins containing the N-terminal motif [Ala/Pro/Ser]-Pro-Lys when the initiator Met is cleaved. Specifically catalyzes mono-, di- or tri-methylation of exposed alpha-amino group of Ala or Ser residue in the [Ala/Ser]-Pro-Lys motif and mono- or di-methylation of Pro in the Pro-Pro-Lys motif. The chain is Alpha N-terminal protein methyltransferase 1 (Ntmt) from Drosophila melanogaster (Fruit fly).